A 127-amino-acid chain; its full sequence is Mating pheromone 4 (127 aa).

Residues 1–16 form the signal peptide; it reads MKAIFIILAILMVTQA. The propeptide occupies 17–42; the sequence is FKMTSKVKSMNMSRNMSKNTSTLGTK.

The protein localises to the secreted. Mating ciliate pheromones (or gamones) are diffusible extracellular communication signals that distinguish different intraspecific classes of cells commonly referred to as 'mating types'. They prepare the latter for conjugation by changing their cell surface properties. This Euplotoides octocarinatus (Freshwater ciliate) protein is Mating pheromone 4 (PHR4).